The chain runs to 183 residues: MASSMISSGTVATVSADRPAPAQARMVAPFTGLKSSSASPVTRKSNDITSIASNGGRVQCMQVWPPLGLKKFETLSYLPPLSTESLAKEVDYLLRKNWVPCLEFELEHGFVYRENHRSPGYYDGRYWTMWKLPMFGCTDSSQVLKELEEAKKAYPQSFIRIIGFDNVRQVQCISFIAYKPAGF.

The transit peptide at 1–59 (MASSMISSGTVATVSADRPAPAQARMVAPFTGLKSSSASPVTRKSNDITSIASNGGRVQ) directs the protein to the chloroplast.

The protein belongs to the RuBisCO small chain family. As to quaternary structure, heterohexadecamer of 8 large and 8 small subunits.

It is found in the plastid. Its subcellular location is the chloroplast. Its function is as follows. RuBisCO catalyzes two reactions: the carboxylation of D-ribulose 1,5-bisphosphate, the primary event in carbon dioxide fixation, as well as the oxidative fragmentation of the pentose substrate. Both reactions occur simultaneously and in competition at the same active site. Although the small subunit is not catalytic it is essential for maximal activity. The chain is Ribulose bisphosphate carboxylase small subunit, chloroplastic from Malus sp. (Crab apple).